We begin with the raw amino-acid sequence, 269 residues long: UPF0761 membrane protein NTHI0384 (269 aa).

6 helical membrane-spanning segments follow: residues 32–52, 89–109, 128–148, 168–188, 203–223, and 232–252; these read MLAI…FPVF, MSAV…NNID, FAIY…SIGI, LLSF…YTVV, FLAA…VVTF, and AMAT…VVLV.

It belongs to the UPF0761 family.

It localises to the cell inner membrane. The chain is UPF0761 membrane protein NTHI0384 from Haemophilus influenzae (strain 86-028NP).